A 252-amino-acid polypeptide reads, in one-letter code: Ribosomal RNA small subunit methyltransferase J (252 aa).

Residues 101-102 (RD), 117-118 (ER), 153-154 (SS), and D171 contribute to the S-adenosyl-L-methionine site.

It belongs to the methyltransferase superfamily. RsmJ family.

It is found in the cytoplasm. It catalyses the reaction guanosine(1516) in 16S rRNA + S-adenosyl-L-methionine = N(2)-methylguanosine(1516) in 16S rRNA + S-adenosyl-L-homocysteine + H(+). Functionally, specifically methylates the guanosine in position 1516 of 16S rRNA. In Citrobacter koseri (strain ATCC BAA-895 / CDC 4225-83 / SGSC4696), this protein is Ribosomal RNA small subunit methyltransferase J.